The following is a 510-amino-acid chain: 2,3-bisphosphoglycerate-independent phosphoglycerate mutase (510 aa).

The Mn(2+) site is built by D12 and S62. The Phosphoserine intermediate role is filled by S62. Substrate-binding positions include H123, 153-154 (RD), R185, R191, 260-263 (RPDR), and K333. D400, H404, D441, H442, and H460 together coordinate Mn(2+).

This sequence belongs to the BPG-independent phosphoglycerate mutase family. As to quaternary structure, monomer. Mn(2+) serves as cofactor.

It catalyses the reaction (2R)-2-phosphoglycerate = (2R)-3-phosphoglycerate. Its pathway is carbohydrate degradation; glycolysis; pyruvate from D-glyceraldehyde 3-phosphate: step 3/5. Catalyzes the interconversion of 2-phosphoglycerate and 3-phosphoglycerate. The protein is 2,3-bisphosphoglycerate-independent phosphoglycerate mutase of Clostridium acetobutylicum (strain ATCC 824 / DSM 792 / JCM 1419 / IAM 19013 / LMG 5710 / NBRC 13948 / NRRL B-527 / VKM B-1787 / 2291 / W).